The primary structure comprises 290 residues: Acetyl-coenzyme A carboxylase carboxyl transferase subunit beta (290 aa).

A CoA carboxyltransferase N-terminal domain is found at 27–290; the sequence is LWHKCPSCEA…FTHSPSPVSA (264 aa). Zn(2+)-binding residues include Cys-31, Cys-34, Cys-50, and Cys-53. The C4-type zinc finger occupies 31-53; that stretch reads CPSCEAVLYRPELEKTLDVCPKC.

The protein belongs to the AccD/PCCB family. As to quaternary structure, acetyl-CoA carboxylase is a heterohexamer composed of biotin carboxyl carrier protein (AccB), biotin carboxylase (AccC) and two subunits each of ACCase subunit alpha (AccA) and ACCase subunit beta (AccD). Zn(2+) serves as cofactor.

It localises to the cytoplasm. It carries out the reaction N(6)-carboxybiotinyl-L-lysyl-[protein] + acetyl-CoA = N(6)-biotinyl-L-lysyl-[protein] + malonyl-CoA. It participates in lipid metabolism; malonyl-CoA biosynthesis; malonyl-CoA from acetyl-CoA: step 1/1. Functionally, component of the acetyl coenzyme A carboxylase (ACC) complex. Biotin carboxylase (BC) catalyzes the carboxylation of biotin on its carrier protein (BCCP) and then the CO(2) group is transferred by the transcarboxylase to acetyl-CoA to form malonyl-CoA. This Pseudomonas aeruginosa (strain UCBPP-PA14) protein is Acetyl-coenzyme A carboxylase carboxyl transferase subunit beta.